The primary structure comprises 131 residues: Profilin-10 (131 aa).

Cys-13 and Cys-115 form a disulfide bridge. An Involved in PIP2 interaction motif is present at residues Ala-81 to Thr-97. A Phosphothreonine modification is found at Thr-111.

It belongs to the profilin family. In terms of assembly, occurs in many kinds of cells as a complex with monomeric actin in a 1:1 ratio. Phosphorylated by MAP kinases.

The protein localises to the cytoplasm. It localises to the cytoskeleton. In terms of biological role, binds to actin and affects the structure of the cytoskeleton. At high concentrations, profilin prevents the polymerization of actin, whereas it enhances it at low concentrations. The sequence is that of Profilin-10 from Phleum pratense (Common timothy).